The primary structure comprises 1399 residues: DNA-directed RNA polymerase subunit beta' (1399 aa).

4 residues coordinate Zn(2+): cysteine 70, cysteine 72, cysteine 85, and cysteine 88. Mg(2+)-binding residues include aspartate 460, aspartate 462, and aspartate 464. Zn(2+) contacts are provided by cysteine 814, cysteine 888, cysteine 895, and cysteine 898. The interval 1367 to 1399 (SERKRQRDLGKPQRVSASEAEAALTEALNSSGN) is disordered. A compositionally biased stretch (low complexity) spans 1382-1399 (SASEAEAALTEALNSSGN).

It belongs to the RNA polymerase beta' chain family. In terms of assembly, the RNAP catalytic core consists of 2 alpha, 1 beta, 1 beta' and 1 omega subunit. When a sigma factor is associated with the core the holoenzyme is formed, which can initiate transcription. Mg(2+) serves as cofactor. It depends on Zn(2+) as a cofactor.

The enzyme catalyses RNA(n) + a ribonucleoside 5'-triphosphate = RNA(n+1) + diphosphate. Functionally, DNA-dependent RNA polymerase catalyzes the transcription of DNA into RNA using the four ribonucleoside triphosphates as substrates. The polypeptide is DNA-directed RNA polymerase subunit beta' (Pseudomonas paraeruginosa (strain DSM 24068 / PA7) (Pseudomonas aeruginosa (strain PA7))).